Here is a 530-residue protein sequence, read N- to C-terminus: Seeligeriolysin (530 aa).

Positions 1–25 (MKIFGLVIMSLLFVSLPITQQPEAR) are cleaved as a signal peptide. A disordered region spans residues 36–55 (TISPAETPESPPATPKTPVE). Beta stranded transmembrane passes span 215–228 (ESQL…AFKA), 235–244 (VNFEAISDGK), 313–322 (SNKVKTAFEA), and 330–342 (KGDV…IKNS). The short motif at 484–494 (ECTGLFWEWWR) is the Conserved undecapeptide element. Positions 516–517 (TL) match the Cholesterol binding motif.

The protein belongs to the cholesterol-dependent cytolysin family. Homooligomeric pore complex of 35 to 50 subunits; when inserted in the host membrane.

It localises to the secreted. Its subcellular location is the host cell membrane. A cholesterol-dependent toxin that causes cytolysis by forming pores in cholesterol containing host membranes. L.seeligeri is non-pathogenic, perhaps in part because this protein is about 25% as toxic as listeriolysin O. Mutating a single residue in the undecapeptide increases toxicity 2-fold. After binding to target membranes, the protein undergoes a major conformation change, leading to its insertion in the host membrane and formation of an oligomeric pore complex. Cholesterol is required for binding to host membranes, membrane insertion and pore formation; cholesterol binding is mediated by a Thr-Leu pair in the C-terminus. Can be reversibly inactivated by oxidation. This chain is Seeligeriolysin, found in Listeria seeligeri.